A 421-amino-acid chain; its full sequence is Ubiquitin-like modifier-activating enzyme 5 (421 aa).

ATP is bound by residues glycine 89, aspartate 110, lysine 133, asparagine 156, and asparagine 191. Residues cysteine 233 and cysteine 236 each contribute to the Zn(2+) site. Residue cysteine 257 is the Glycyl thioester intermediate of the active site. Zn(2+)-binding residues include cysteine 310 and cysteine 315.

It belongs to the ubiquitin-activating E1 family. UBA5 subfamily.

E1-like enzyme which activates UFM1. The protein is Ubiquitin-like modifier-activating enzyme 5 of Oryza sativa subsp. japonica (Rice).